We begin with the raw amino-acid sequence, 366 residues long: sn-glycerol-3-phosphate import ATP-binding protein UgpC (366 aa).

The ABC transporter domain occupies 4 to 235; the sequence is LSLRNVQKTY…PASTFVAGFI (232 aa). Residue 37-44 coordinates ATP; sequence GPSGCGKS.

Belongs to the ABC transporter superfamily. sn-glycerol-3-phosphate importer (TC 3.A.1.1.3) family. As to quaternary structure, the complex is composed of two ATP-binding proteins (UgpC), two transmembrane proteins (UgpA and UgpE) and a solute-binding protein (UgpB).

It localises to the cell inner membrane. It carries out the reaction sn-glycerol 3-phosphate(out) + ATP + H2O = sn-glycerol 3-phosphate(in) + ADP + phosphate + H(+). Its function is as follows. Part of the ABC transporter complex UgpBAEC involved in sn-glycerol-3-phosphate (G3P) import. Responsible for energy coupling to the transport system. The polypeptide is sn-glycerol-3-phosphate import ATP-binding protein UgpC (Cupriavidus necator (strain ATCC 17699 / DSM 428 / KCTC 22496 / NCIMB 10442 / H16 / Stanier 337) (Ralstonia eutropha)).